The sequence spans 446 residues: Methylenetetrahydrofolate--tRNA-(uracil-5-)-methyltransferase TrmFO (446 aa).

An FAD-binding site is contributed by 11–16; the sequence is GGGLAG.

It belongs to the MnmG family. TrmFO subfamily. FAD serves as cofactor.

The protein resides in the cytoplasm. The catalysed reaction is uridine(54) in tRNA + (6R)-5,10-methylene-5,6,7,8-tetrahydrofolate + NADH + H(+) = 5-methyluridine(54) in tRNA + (6S)-5,6,7,8-tetrahydrofolate + NAD(+). It carries out the reaction uridine(54) in tRNA + (6R)-5,10-methylene-5,6,7,8-tetrahydrofolate + NADPH + H(+) = 5-methyluridine(54) in tRNA + (6S)-5,6,7,8-tetrahydrofolate + NADP(+). Catalyzes the folate-dependent formation of 5-methyl-uridine at position 54 (M-5-U54) in all tRNAs. The polypeptide is Methylenetetrahydrofolate--tRNA-(uracil-5-)-methyltransferase TrmFO (Oleidesulfovibrio alaskensis (strain ATCC BAA-1058 / DSM 17464 / G20) (Desulfovibrio alaskensis)).